The primary structure comprises 182 residues: UPF0397 protein SAG1634 (182 aa).

The next 5 helical transmembrane spans lie at 9–29, 42–62, 74–94, 109–129, and 148–168; these read VVAT…VNIP, AVLA…TGFI, SPWW…GFFA, LLLF…VVAP, and FLSS…LLLA.

It belongs to the UPF0397 family.

The protein resides in the cell membrane. This Streptococcus agalactiae serotype V (strain ATCC BAA-611 / 2603 V/R) protein is UPF0397 protein SAG1634.